A 269-amino-acid polypeptide reads, in one-letter code: Nuclear egress protein 2 (269 aa).

Residues 1–247 are Perinuclear space-facing; the sequence is MSRRTYVRSE…VWKLALPVAN (247 aa). A helical membrane pass occupies residues 248 to 268; that stretch reads VTYALFIVIVLVVVLGAVLFW. Residue lysine 269 is a topological domain, nuclear.

This sequence belongs to the herpesviridae NEC2 protein family. As to quaternary structure, forms a heterohexameric complex with NEC1. Phosphorylated.

It is found in the host nucleus inner membrane. Functionally, plays an essential role in virion nuclear egress, the first step of virion release from infected cell. Within the host nucleus, NEC1 interacts with the newly formed capsid through the vertexes and directs it to the inner nuclear membrane by associating with NEC2. Induces the budding of the capsid at the inner nuclear membrane as well as its envelopment into the perinuclear space. There, the NEC1/NEC2 complex promotes the fusion of the enveloped capsid with the outer nuclear membrane and the subsequent release of the viral capsid into the cytoplasm where it will reach the secondary budding sites in the host Golgi or trans-Golgi network. In Homo sapiens (Human), this protein is Nuclear egress protein 2.